The sequence spans 268 residues: Glutamate racemase (268 aa).

Substrate-binding positions include 14–15 (DS) and 46–47 (YG). The active-site Proton donor/acceptor is C78. 79–80 (NS) provides a ligand contact to substrate. C190 acts as the Proton donor/acceptor in catalysis. 191 to 192 (TH) is a substrate binding site.

Belongs to the aspartate/glutamate racemases family.

The enzyme catalyses L-glutamate = D-glutamate. It participates in cell wall biogenesis; peptidoglycan biosynthesis. In terms of biological role, provides the (R)-glutamate required for cell wall biosynthesis. The protein is Glutamate racemase of Treponema pallidum (strain Nichols).